The chain runs to 146 residues: Hemoglobin subunit beta (146 aa).

A Globin domain is found at 2–146; that stretch reads FLTAEEKGLV…VASALAHRYH (145 aa). The residue at position 44 (S44) is a Phosphoserine. K59 is modified (N6-acetyllysine). H63 contacts heme b. Position 82 is an N6-acetyllysine (K82). H92 provides a ligand contact to heme b. C93 is modified (S-nitrosocysteine).

It belongs to the globin family. Heterotetramer of two alpha chains and two beta chains. In terms of tissue distribution, red blood cells.

In terms of biological role, involved in oxygen transport from the lung to the various peripheral tissues. In Paguma larvata (Masked palm civet), this protein is Hemoglobin subunit beta (HBB).